The following is a 39-amino-acid chain: Cytochrome b559 subunit beta (39 aa).

Residues 14–30 form a helical membrane-spanning segment; sequence WLTVHGLAVPTVSFLGS. His-18 is a binding site for heme.

The protein belongs to the PsbE/PsbF family. Heterodimer of an alpha subunit and a beta subunit. PSII is composed of 1 copy each of membrane proteins PsbA, PsbB, PsbC, PsbD, PsbE, PsbF, PsbH, PsbI, PsbJ, PsbK, PsbL, PsbM, PsbT, PsbX, PsbY, PsbZ, Psb30/Ycf12, at least 3 peripheral proteins of the oxygen-evolving complex and a large number of cofactors. It forms dimeric complexes. Heme b is required as a cofactor.

The protein resides in the plastid. It is found in the chloroplast thylakoid membrane. Its function is as follows. This b-type cytochrome is tightly associated with the reaction center of photosystem II (PSII). PSII is a light-driven water:plastoquinone oxidoreductase that uses light energy to abstract electrons from H(2)O, generating O(2) and a proton gradient subsequently used for ATP formation. It consists of a core antenna complex that captures photons, and an electron transfer chain that converts photonic excitation into a charge separation. In Lactuca sativa (Garden lettuce), this protein is Cytochrome b559 subunit beta.